A 43-amino-acid polypeptide reads, in one-letter code: Protein PsbN (43 aa).

The chain crosses the membrane as a helical span at residues 5 to 27 (TLVTISISCLLVSFTGYALYTAF).

This sequence belongs to the PsbN family.

The protein localises to the plastid. The protein resides in the chloroplast thylakoid membrane. In terms of biological role, may play a role in photosystem I and II biogenesis. In Pinus koraiensis (Korean pine), this protein is Protein PsbN.